Reading from the N-terminus, the 1390-residue chain is ABC transporter G family member 43 (1390 aa).

The tract at residues 1–22 (MTMPQTDGVEFASRNNLENGDG) is disordered. The 275-residue stretch at 137 to 411 (SKLSRFTFSK…FEDCGFKCPQ (275 aa)) folds into the ABC transporter 1 domain. Residue 171–178 (GPPGCGKT) participates in ATP binding. The region spanning 489–701 (DMFKACSRRE…AEIGLTSNEF (213 aa)) is the ABC transmembrane type-2 1 domain. 6 consecutive transmembrane segments (helical) span residues 507–527 (FVYV…MTVY), 541–561 (YLLG…LPEL), 594–614 (IPIS…VIGY), 626–646 (LILF…GAVF), 651–671 (VATT…GFIV), and 737–757 (FGAL…ALTF). In terms of domain architecture, ABC transporter 2 spans 798–1043 (FTFQDVQYFI…VIEYFMSIPG (246 aa)). Residue 835–842 (GVSGAGKT) participates in ATP binding. An ABC transmembrane type-2 2 domain is found at 1115–1329 (EQFKACLWKQ…VLNGLLTSQY (215 aa)). Transmembrane regions (helical) follow at residues 1134–1154 (YNLT…ILFL), 1173–1193 (MFTV…FCVA), 1218–1238 (VLVE…IVYP), 1253–1273 (FYSI…LVVV), 1279–1299 (IAFT…GYVM), 1307–1327 (WWIW…LLTS), and 1362–1382 (LVAV…AFFI).

It belongs to the ABC transporter superfamily. ABCG family. PDR (TC 3.A.1.205) subfamily.

The protein localises to the membrane. Its function is as follows. May be a general defense protein. This Arabidopsis thaliana (Mouse-ear cress) protein is ABC transporter G family member 43 (ABCG43).